The sequence spans 336 residues: Dihydroorotate dehydrogenase (quinone) (336 aa).

FMN-binding positions include Ala62–Lys66 and Thr86. Lys66 provides a ligand contact to substrate. Residue Asn111–Phe115 participates in substrate binding. Positions 139 and 172 each coordinate FMN. A substrate-binding site is contributed by Asn172. Ser175 functions as the Nucleophile in the catalytic mechanism. Position 177 (Asn177) interacts with substrate. 2 residues coordinate FMN: Lys217 and Thr245. Asn246 to Thr247 contributes to the substrate binding site. FMN contacts are provided by residues Gly268, Gly297, and Tyr318–Ser319.

Belongs to the dihydroorotate dehydrogenase family. Type 2 subfamily. As to quaternary structure, monomer. Requires FMN as cofactor.

The protein localises to the cell membrane. It catalyses the reaction (S)-dihydroorotate + a quinone = orotate + a quinol. The protein operates within pyrimidine metabolism; UMP biosynthesis via de novo pathway; orotate from (S)-dihydroorotate (quinone route): step 1/1. Functionally, catalyzes the conversion of dihydroorotate to orotate with quinone as electron acceptor. The polypeptide is Dihydroorotate dehydrogenase (quinone) (Hamiltonella defensa subsp. Acyrthosiphon pisum (strain 5AT)).